Reading from the N-terminus, the 287-residue chain is ATP synthase gamma chain (287 aa).

Belongs to the ATPase gamma chain family. As to quaternary structure, F-type ATPases have 2 components, CF(1) - the catalytic core - and CF(0) - the membrane proton channel. CF(1) has five subunits: alpha(3), beta(3), gamma(1), delta(1), epsilon(1). CF(0) has three main subunits: a, b and c.

The protein resides in the cell inner membrane. Its function is as follows. Produces ATP from ADP in the presence of a proton gradient across the membrane. The gamma chain is believed to be important in regulating ATPase activity and the flow of protons through the CF(0) complex. The protein is ATP synthase gamma chain of Xylella fastidiosa (strain 9a5c).